The primary structure comprises 445 residues: Tubulin beta-2B chain (445 aa).

The MREI motif signature appears at 1–4 (MREI). Gln11 contacts GTP. Ser40 carries the post-translational modification Phosphoserine. Position 55 is a phosphothreonine (Thr55). N6-acetyllysine; alternate is present on Lys58. The residue at position 58 (Lys58) is an N6-succinyllysine; alternate. Residue Lys58 forms a Glycyl lysine isopeptide (Lys-Gly) (interchain with G-Cter in ubiquitin); alternate linkage. Residues Glu69, Ser138, Gly142, Thr143, and Gly144 each contribute to the GTP site. Glu69 contributes to the Mg(2+) binding site. Residue Ser172 is modified to Phosphoserine; by CDK1. 2 residues coordinate GTP: Asn204 and Asn226. Phosphothreonine is present on residues Thr285 and Thr290. The residue at position 318 (Arg318) is an Omega-N-methylarginine. A Glycyl lysine isopeptide (Lys-Gly) (interchain with G-Cter in ubiquitin) cross-link involves residue Lys324. The segment at 422–445 (YQQYQDATADEQGEFEEEEGEDEA) is disordered. The span at 429 to 445 (TADEQGEFEEEEGEDEA) shows a compositional bias: acidic residues. Glu438 carries the 5-glutamyl polyglutamate modification.

Belongs to the tubulin family. As to quaternary structure, dimer of alpha and beta chains. A typical microtubule is a hollow water-filled tube with an outer diameter of 25 nm and an inner diameter of 15 nM. Alpha-beta heterodimers associate head-to-tail to form protofilaments running lengthwise along the microtubule wall with the beta-tubulin subunit facing the microtubule plus end conferring a structural polarity. Microtubules usually have 13 protofilaments but different protofilament numbers can be found in some organisms and specialized cells. Mg(2+) serves as cofactor. Post-translationally, some glutamate residues at the C-terminus are polyglycylated, resulting in polyglycine chains on the gamma-carboxyl group. Glycylation is mainly limited to tubulin incorporated into axonemes (cilia and flagella) whereas glutamylation is prevalent in neuronal cells, centrioles, axonemes, and the mitotic spindle. Both modifications can coexist on the same protein on adjacent residues, and lowering polyglycylation levels increases polyglutamylation, and reciprocally. The precise function of polyglycylation is still unclear. Some glutamate residues at the C-terminus are polyglutamylated, resulting in polyglutamate chains on the gamma-carboxyl group. Polyglutamylation plays a key role in microtubule severing by spastin (SPAST). SPAST preferentially recognizes and acts on microtubules decorated with short polyglutamate tails: severing activity by SPAST increases as the number of glutamates per tubulin rises from one to eight, but decreases beyond this glutamylation threshold. In terms of processing, phosphorylated on Ser-172 by CDK1 during the cell cycle, from metaphase to telophase, but not in interphase. This phosphorylation inhibits tubulin incorporation into microtubules.

It is found in the cytoplasm. The protein localises to the cytoskeleton. In terms of biological role, tubulin is the major constituent of microtubules, a cylinder consisting of laterally associated linear protofilaments composed of alpha- and beta-tubulin heterodimers. Microtubules grow by the addition of GTP-tubulin dimers to the microtubule end, where a stabilizing cap forms. Below the cap, tubulin dimers are in GDP-bound state, owing to GTPase activity of alpha-tubulin. Implicated in neuronal migration. In Bos taurus (Bovine), this protein is Tubulin beta-2B chain (TUBB2B).